Consider the following 388-residue polypeptide: Pepsin A-5 (388 aa).

Positions 1 to 15 (MKWLLLLGLVALSEC) are cleaved as a signal peptide. Positions 16 to 62 (IMYKVPLIRKKSLRRTLSERGLLKDFLKKHNLNPARKYFPQWEAPTL) are cleaved as a propeptide — activation peptide. A Peptidase A1 domain is found at 76 to 385 (YFGTIGIGTP…DRANNQVGLA (310 aa)). Asp94 is an active-site residue. A disulfide bridge connects residues Cys107 and Cys112. Ser130 is subject to Phosphoserine. An intrachain disulfide couples Cys268 to Cys272. Asp277 is an active-site residue. Cys311 and Cys344 are oxidised to a cystine.

This sequence belongs to the peptidase A1 family.

Its subcellular location is the secreted. It catalyses the reaction Preferential cleavage: hydrophobic, preferably aromatic, residues in P1 and P1' positions. Cleaves 1-Phe-|-Val-2, 4-Gln-|-His-5, 13-Glu-|-Ala-14, 14-Ala-|-Leu-15, 15-Leu-|-Tyr-16, 16-Tyr-|-Leu-17, 23-Gly-|-Phe-24, 24-Phe-|-Phe-25 and 25-Phe-|-Tyr-26 bonds in the B chain of insulin.. Functionally, shows particularly broad specificity; although bonds involving phenylalanine and leucine are preferred, many others are also cleaved to some extent. This Homo sapiens (Human) protein is Pepsin A-5 (PGA5).